We begin with the raw amino-acid sequence, 618 residues long: Proline--tRNA ligase (618 aa).

It belongs to the class-II aminoacyl-tRNA synthetase family. ProS type 1 subfamily. As to quaternary structure, homodimer.

Its subcellular location is the cytoplasm. The enzyme catalyses tRNA(Pro) + L-proline + ATP = L-prolyl-tRNA(Pro) + AMP + diphosphate. Functionally, catalyzes the attachment of proline to tRNA(Pro) in a two-step reaction: proline is first activated by ATP to form Pro-AMP and then transferred to the acceptor end of tRNA(Pro). As ProRS can inadvertently accommodate and process non-cognate amino acids such as alanine and cysteine, to avoid such errors it has two additional distinct editing activities against alanine. One activity is designated as 'pretransfer' editing and involves the tRNA(Pro)-independent hydrolysis of activated Ala-AMP. The other activity is designated 'posttransfer' editing and involves deacylation of mischarged Ala-tRNA(Pro). The misacylated Cys-tRNA(Pro) is not edited by ProRS. In Streptococcus pyogenes serotype M5 (strain Manfredo), this protein is Proline--tRNA ligase.